Here is a 189-residue protein sequence, read N- to C-terminus: Isopentenyl-diphosphate Delta-isomerase (189 aa).

Mn(2+) is bound by residues histidine 27 and histidine 34. In terms of domain architecture, Nudix hydrolase spans 32–171; that stretch reads PLHFAFSTYI…PFVFSPWMVD (140 aa). Cysteine 69 is a catalytic residue. Position 71 (histidine 71) interacts with Mn(2+). Glutamate 89 provides a ligand contact to Mg(2+). Mn(2+) is bound by residues glutamate 119 and glutamate 121. Glutamate 121 is a catalytic residue.

The protein belongs to the IPP isomerase type 1 family. Requires Mg(2+) as cofactor. The cofactor is Mn(2+).

It localises to the cytoplasm. It catalyses the reaction isopentenyl diphosphate = dimethylallyl diphosphate. Its pathway is isoprenoid biosynthesis; dimethylallyl diphosphate biosynthesis; dimethylallyl diphosphate from isopentenyl diphosphate: step 1/1. In terms of biological role, catalyzes the 1,3-allylic rearrangement of the homoallylic substrate isopentenyl (IPP) to its highly electrophilic allylic isomer, dimethylallyl diphosphate (DMAPP). The sequence is that of Isopentenyl-diphosphate Delta-isomerase from Corynebacterium glutamicum (strain R).